We begin with the raw amino-acid sequence, 172 residues long: Bcl-2-related protein A1 (172 aa).

The BH1 signature appears at 77 to 97; that stretch reads KEFEDGIINWGRIVTIFAFGG. The BH2 motif lies at 132–147; it reads EWIRQNGGWEDGFIKK.

This sequence belongs to the Bcl-2 family. Interacts directly with BCL2L11/BIM and PMAIP1. Interacts directly with BAK1, BID, BMF and BBC3. Interacts with BOP. Interacts with isoform 3, isoform 4 and isoform 5 of ING4. Interacts with UBQLN4. As to expression, expressed in hemopoietic tissues, including bone marrow, spleen and thymus.

It localises to the cytoplasm. Retards apoptosis induced by IL-3 deprivation. May function in the response of hemopoietic cells to external signals and in maintaining endothelial survival during infection. Can inhibit apoptosis induced by serum starvation in the mammary epithelial cell line HC11. This is Bcl-2-related protein A1 (Bcl2a1) from Mus musculus (Mouse).